Here is a 189-residue protein sequence, read N- to C-terminus: Lipid A acyltransferase PagP (189 aa).

The signal sequence occupies residues 1–23; sequence MKLKSVLYLLMLLNCLGLKSAHA. Active-site residues include H61, D104, and S105.

Belongs to the lipid A palmitoyltransferase family. In terms of assembly, homodimer.

The protein localises to the cell outer membrane. The enzyme catalyses a lipid A + a 1,2-diacyl-sn-glycero-3-phosphocholine = a hepta-acyl lipid A + a 2-acyl-sn-glycero-3-phosphocholine. It catalyses the reaction a lipid IVA + a 1,2-diacyl-sn-glycero-3-phosphocholine = a lipid IVB + a 2-acyl-sn-glycero-3-phosphocholine. The catalysed reaction is a lipid IIA + a 1,2-diacyl-sn-glycero-3-phosphocholine = a lipid IIB + a 2-acyl-sn-glycero-3-phosphocholine. In terms of biological role, transfers a fatty acid residue from the sn-1 position of a phospholipid to the N-linked hydroxyfatty acid chain on the proximal unit of lipid A or its precursors. This Erwinia amylovora (strain ATCC 49946 / CCPPB 0273 / Ea273 / 27-3) protein is Lipid A acyltransferase PagP.